Consider the following 88-residue polypeptide: Transcription factor ILI5 (88 aa).

The bHLH domain occupies 1 to 54 (MSSRRSSRGSISEEEINELISKLQSLLPNSRRRGSSQASTTKLLKETCNYIKSL).

The protein belongs to the bHLH protein family. In terms of assembly, interacts with APG.

The protein resides in the nucleus. Its function is as follows. Atypical and probable non DNA-binding bHLH transcription factor that acts as a positive regulator of grain size. Binds the transcription repressor APG and forms a heterodimer of antagonistic basic helix-loop-helix transcription factors that regulates grain length and weight by controlling cell elongation in lemma and palea. The protein is Transcription factor ILI5 (ILI5) of Oryza sativa subsp. indica (Rice).